A 611-amino-acid polypeptide reads, in one-letter code: Chaperone protein DnaK (611 aa).

Thr172 is modified (phosphothreonine; by autocatalysis). The segment at 575 to 611 is disordered; sequence AAQAAQAQQDGGNESADKQDDNVVDADYEEVNDDDKK. Acidic residues predominate over residues 596-611; the sequence is NVVDADYEEVNDDDKK.

This sequence belongs to the heat shock protein 70 family.

Its function is as follows. Acts as a chaperone. This Shouchella clausii (strain KSM-K16) (Alkalihalobacillus clausii) protein is Chaperone protein DnaK.